A 420-amino-acid polypeptide reads, in one-letter code: Dual-specificity RNA methyltransferase RlmN (420 aa).

The active-site Proton acceptor is the Glu115. The 268-residue stretch at 121–388 folds into the Radical SAM core domain; the sequence is DADRGTLCVS…APIRTPRGRD (268 aa). The cysteines at positions 128 and 393 are disulfide-linked. Residues Cys135, Cys139, and Cys142 each coordinate [4Fe-4S] cluster. S-adenosyl-L-methionine is bound by residues 217–218, Ser249, 271–273, and Asn350; these read GE and SLH. Cys393 functions as the S-methylcysteine intermediate in the catalytic mechanism.

This sequence belongs to the radical SAM superfamily. RlmN family. It depends on [4Fe-4S] cluster as a cofactor.

It localises to the cytoplasm. It carries out the reaction adenosine(2503) in 23S rRNA + 2 reduced [2Fe-2S]-[ferredoxin] + 2 S-adenosyl-L-methionine = 2-methyladenosine(2503) in 23S rRNA + 5'-deoxyadenosine + L-methionine + 2 oxidized [2Fe-2S]-[ferredoxin] + S-adenosyl-L-homocysteine. The catalysed reaction is adenosine(37) in tRNA + 2 reduced [2Fe-2S]-[ferredoxin] + 2 S-adenosyl-L-methionine = 2-methyladenosine(37) in tRNA + 5'-deoxyadenosine + L-methionine + 2 oxidized [2Fe-2S]-[ferredoxin] + S-adenosyl-L-homocysteine. Functionally, specifically methylates position 2 of adenine 2503 in 23S rRNA and position 2 of adenine 37 in tRNAs. m2A2503 modification seems to play a crucial role in the proofreading step occurring at the peptidyl transferase center and thus would serve to optimize ribosomal fidelity. The chain is Dual-specificity RNA methyltransferase RlmN from Sphingopyxis alaskensis (strain DSM 13593 / LMG 18877 / RB2256) (Sphingomonas alaskensis).